The sequence spans 492 residues: Stage IV sporulation protein A (492 aa).

Positions 24 to 31 (GAVRTGKS) match the Walker A motif; involved in ATP-binding and hydrolysis motif. An ATP-binding site is contributed by 24–31 (GAVRTGKS).

Polymerizes to self-assemble into static filaments. ATP hydrolysis is required by every subunit for incorporation into the growing polymer by inducing a conformational change that drives polymerization of a nucleotide-free filament. Polymerization requires a critical concentration of the protein and only occurs after it is localized to the surface of the developing spore. Interacts (via extreme C-terminus Gly-486) with SpoVM (via Ile-6). Interacts (via full-length) with SpoVID (via C-terminus 499-575 AA). Interacts with SafA. Seems to be cleaved by the YabG protease.

The protein resides in the cytoplasm. The catalysed reaction is ATP + H2O = ADP + phosphate + H(+). In terms of biological role, ATPase. Has a role at an early stage in the morphogenesis of the spore coat outer layers. Its ATP hydrolysis is required for proper assembly of the spore coat. Forms a basement layer around the outside surface of the forespore and self-assembles irreversibly into higher order structures by binding and hydrolyzing ATP thus creating a durable and stable platform upon which thereafter morphogenesis of the coat can take place. Required for proper localization of spore coat protein CotE and sporulation-specific proteins including SpoVM. This is Stage IV sporulation protein A (spoIVA) from Bacillus subtilis (strain 168).